The primary structure comprises 465 residues: Cysteine--tRNA ligase (465 aa).

Cysteine 27 contacts Zn(2+). The short motif at 29–39 (PTVYDDAHLGH) is the 'HIGH' region element. Zn(2+) is bound by residues cysteine 207, histidine 237, and glutamate 241. Positions 269-273 (KMSKS) match the 'KMSKS' region motif. Position 272 (lysine 272) interacts with ATP.

Belongs to the class-I aminoacyl-tRNA synthetase family. Monomer. Zn(2+) serves as cofactor.

Its subcellular location is the cytoplasm. It carries out the reaction tRNA(Cys) + L-cysteine + ATP = L-cysteinyl-tRNA(Cys) + AMP + diphosphate. The sequence is that of Cysteine--tRNA ligase (cysS) from Helicobacter pylori (strain ATCC 700392 / 26695) (Campylobacter pylori).